The sequence spans 527 residues: Peptide chain release factor 3 (527 aa).

A tr-type G domain is found at 9 to 277 (AKRRTFAIIS…AVVDWAPRPL (269 aa)). Residues 18–25 (SHPDAGKT), 86–90 (DTPGH), and 140–143 (NKLD) contribute to the GTP site.

Belongs to the TRAFAC class translation factor GTPase superfamily. Classic translation factor GTPase family. PrfC subfamily.

The protein resides in the cytoplasm. Its function is as follows. Increases the formation of ribosomal termination complexes and stimulates activities of RF-1 and RF-2. It binds guanine nucleotides and has strong preference for UGA stop codons. It may interact directly with the ribosome. The stimulation of RF-1 and RF-2 is significantly reduced by GTP and GDP, but not by GMP. In Ectopseudomonas mendocina (strain ymp) (Pseudomonas mendocina), this protein is Peptide chain release factor 3.